The primary structure comprises 163 residues: Lysosomal enzyme trafficking factor (163 aa).

2 consecutive transmembrane segments (helical) span residues 40 to 60 (MGWI…YYVF) and 98 to 118 (LPFW…FLFL).

This sequence belongs to the LYSET family. As to quaternary structure, interacts with GNPTAB; this interaction is important for proper localization of GNPTAB in Golgi stacks. Interacts with MBTPS1.

The protein resides in the golgi apparatus membrane. Its function is as follows. Required for mannose-6-phosphate-dependent trafficking of lysosomal enzymes. LYSET bridges GlcNAc-1-phosphate transferase (GNPTAB), to the membrane-bound transcription factor site-1 protease (MBTPS1), thus allowing proteolytic activation of the GNPTAB. GNPTAB is involved in the regulation of M6P-dependent Golgi-to-lysosome trafficking of lysosomal enzymes. LYSET is thus an essential factor for maturation and delivery of lysosomal hydrolases. The sequence is that of Lysosomal enzyme trafficking factor (LYSET) from Bos taurus (Bovine).